Consider the following 393-residue polypeptide: Mitogen-activated protein kinase SIPK (393 aa).

Positions 1-11 are enriched in polar residues; sequence MDGSGQQTDTM. Residues 1 to 31 are disordered; the sequence is MDGSGQQTDTMMSDAGAEQPPPAPQPVAGMD. Positions 60 to 345 constitute a Protein kinase domain; sequence KPPILPIGKG…VEGALAHPYL (286 aa). ATP-binding positions include 66–74 and lysine 89; that span reads IGKGAYGIV. The active-site Proton acceptor is aspartate 186. The short motif at 218 to 220 is the TXY element; that stretch reads TEY.

Belongs to the protein kinase superfamily. CMGC Ser/Thr protein kinase family. MAP kinase subfamily. In terms of assembly, interacts with SIPKK.

The enzyme catalyses L-tyrosyl-[protein] + ATP = O-phospho-L-tyrosyl-[protein] + ADP + H(+). It carries out the reaction L-seryl-[protein] + ATP = O-phospho-L-seryl-[protein] + ADP + H(+). It catalyses the reaction L-threonyl-[protein] + ATP = O-phospho-L-threonyl-[protein] + ADP + H(+). Its activity is regulated as follows. Activated by threonine and tyrosine phosphorylation. In terms of biological role, phosphorylates myelin basic protein (MBP) in vitro. May be involved in disease resistance. The sequence is that of Mitogen-activated protein kinase SIPK from Nicotiana tabacum (Common tobacco).